The sequence spans 368 residues: Homoserine O-acetyltransferase (368 aa).

Residues 43-354 form the AB hydrolase-1 domain; it reads NVVVVCHALT…DYGHDAFLVE (312 aa). Ser148 serves as the catalytic Nucleophile. Substrate is bound at residue Arg220. Residues Asp314 and His348 contribute to the active site. Asp349 is a binding site for substrate.

The protein belongs to the AB hydrolase superfamily. MetX family. As to quaternary structure, homodimer.

The protein localises to the cytoplasm. The enzyme catalyses L-homoserine + acetyl-CoA = O-acetyl-L-homoserine + CoA. The protein operates within amino-acid biosynthesis; L-methionine biosynthesis via de novo pathway; O-acetyl-L-homoserine from L-homoserine: step 1/1. In terms of biological role, transfers an acetyl group from acetyl-CoA to L-homoserine, forming acetyl-L-homoserine. The chain is Homoserine O-acetyltransferase from Sulfurimonas autotrophica (strain ATCC BAA-671 / DSM 16294 / JCM 11897 / OK10).